The sequence spans 377 residues: MSDGIVIIGSGFAARQLVKNIRKQDAQIPLTLIAADSMDEYNKPDLSHVISRGQKADDLTLQSAGEFAEQYTLRLFPHTWVSDIDAENRLVKSHDNQWRYDKLVLATGATPFIPSVPGRELMLTLNSQREYGAAQSQLHDAKRVLIVGGGLIGCELAMDFCRAGKAVTVVDNSASVLAALMPPEASSRLQHRLTEMGVHLMLKTQLEGLEQTADGIRVSLDRQRAITVDAVVAAAGLRPETSLARHAGLQINRGIVVNSQLQTSDPAIYALGDCAEINGVVLPFLQPILLSAMCLSKNLLAQAGELKLPPMLVKVKTPDLPLHLAGDTRRDDLTWNIVAAKEGLVAKGVDAENQLRAFVVSEDKMKEAFALLKQLVS.

Belongs to the FAD-dependent oxidoreductase family. FAD is required as a cofactor.

Its subcellular location is the cytoplasm. It carries out the reaction 2 reduced [nitric oxide reductase rubredoxin domain] + NAD(+) + H(+) = 2 oxidized [nitric oxide reductase rubredoxin domain] + NADH. The protein operates within nitrogen metabolism; nitric oxide reduction. Functionally, one of at least two accessory proteins for anaerobic nitric oxide (NO) reductase. Reduces the rubredoxin moiety of NO reductase. In Klebsiella pneumoniae subsp. pneumoniae (strain ATCC 700721 / MGH 78578), this protein is Nitric oxide reductase FlRd-NAD(+) reductase.